A 134-amino-acid polypeptide reads, in one-letter code: MARVKRGVAAHAKHKKVLKAAKGFYGRRKNTIRTAKAAVDRAKQYAYRDRKVNKRNFRALWIQRINAAVREFGLTYGRFIDGLNKAGIEVDRKVLSDMAIHEPEAFGALVAAAKKALEYLKETGTANEFEGAVR.

The protein belongs to the bacterial ribosomal protein bL20 family.

Its function is as follows. Binds directly to 23S ribosomal RNA and is necessary for the in vitro assembly process of the 50S ribosomal subunit. It is not involved in the protein synthesizing functions of that subunit. The protein is Large ribosomal subunit protein bL20 of Rhizobium etli (strain ATCC 51251 / DSM 11541 / JCM 21823 / NBRC 15573 / CFN 42).